Consider the following 440-residue polypeptide: Proton extrusion protein PxcA (440 aa).

Transmembrane regions (helical) follow at residues 222 to 242, 316 to 336, 352 to 374, and 400 to 420; these read FVLT…TFFL, NAIA…LVLV, IVYG…MFVG, and FNFL…KYWI.

The protein belongs to the CemA family.

The protein resides in the cell inner membrane. Its function is as follows. Required for H(+) efflux immediately after light irradiation to form a rapid H(+) concentration gradient across the thylakoid membranes. Together with PxcL, contributes to transient H(+) uptake following dark to light transition. Involved in light-induced Na(+)-dependent proton extrusion. Also seems to be involved in CO(2) transport. The chain is Proton extrusion protein PxcA from Synechocystis sp. (strain ATCC 27184 / PCC 6803 / Kazusa).